Here is a 523-residue protein sequence, read N- to C-terminus: Synaptotagmin-10 (523 aa).

Residues 1–55 (MSFHKEDGVNSLCQKALHIVTELCFAGQVEWEKCSGIFPRDRGSQGGSSTDISVS) lie on the Vesicular side of the membrane. The segment at 13 to 35 (CQKALHIVTELCFAGQVEWEKCS) is cysteine motif. The helical transmembrane segment at 56–76 (LLAVVVSFCGLALLVVSLFVF) threads the bilayer. Over 77–523 (WKLCWPCWKS…CPSPKPPSTP (447 aa)) the chain is Cytoplasmic. Residue T136 is modified to Phosphothreonine. C2 domains are found at residues 231 to 352 (ICGK…TVWK) and 363 to 496 (DLGE…THWH). Ca(2+) contacts are provided by D262, D268, D320, F321, D322, S325, D328, D394, D400, D454, and D456.

It belongs to the synaptotagmin family. As to quaternary structure, homodimer; disulfide-linked via the cysteine motif. Can also form heterodimers with SYT3, SYT6, SYT7 and SYT9. Ca(2+) is required as a cofactor. Expressed only in pancreas, lung and kidney.

The protein localises to the cytoplasmic vesicle. It localises to the secretory vesicle membrane. Ca(2+) sensor specifically required for the Ca(2+)-dependent exocytosis of secretory vesicles containing IGF1 in neurons of the olfactory bulb. Exocytosis of IGF1 is required for sensory perception of smell. Not involved in Ca(2+)-dependent synaptic vesicle exocytosis. Acts through Ca(2+) and phospholipid binding to the C2 domain: Ca(2+) induces binding of the C2-domains to phospholipid membranes and to assembled SNARE-complexes; both actions contribute to triggering exocytosis. In Homo sapiens (Human), this protein is Synaptotagmin-10 (SYT10).